The sequence spans 289 residues: Proteasome subunit beta (289 aa).

Positions 1–55 (MTWPLPDRLSINSAISGSAVDLSSFAEFLRRQAPELLPASIKHGGGAVGDQLPHA) are cleaved as a propeptide — removed in mature form; by autocatalysis. T56 (nucleophile) is an active-site residue.

The protein belongs to the peptidase T1B family. As to quaternary structure, the 20S proteasome core is composed of 14 alpha and 14 beta subunits that assemble into four stacked heptameric rings, resulting in a barrel-shaped structure. The two inner rings, each composed of seven catalytic beta subunits, are sandwiched by two outer rings, each composed of seven alpha subunits. The catalytic chamber with the active sites is on the inside of the barrel. Has a gated structure, the ends of the cylinder being occluded by the N-termini of the alpha-subunits. Is capped by the proteasome-associated ATPase, ARC.

Its subcellular location is the cytoplasm. It catalyses the reaction Cleavage of peptide bonds with very broad specificity.. Its pathway is protein degradation; proteasomal Pup-dependent pathway. With respect to regulation, the formation of the proteasomal ATPase ARC-20S proteasome complex, likely via the docking of the C-termini of ARC into the intersubunit pockets in the alpha-rings, may trigger opening of the gate for substrate entry. Interconversion between the open-gate and close-gate conformations leads to a dynamic regulation of the 20S proteasome proteolysis activity. Its function is as follows. Component of the proteasome core, a large protease complex with broad specificity involved in protein degradation. The sequence is that of Proteasome subunit beta from Mycobacterium marinum (strain ATCC BAA-535 / M).